The sequence spans 103 residues: MERIRLKLKAYDHRVLDRTVAAIVEAVKRTGADIRGPVPMPTKIKRYTVLKSPHINKDSREQFEMRIHARMLDIVAATPDTVDSLTKLDLAPEVNVEVRAMGK.

The protein belongs to the universal ribosomal protein uS10 family. As to quaternary structure, part of the 30S ribosomal subunit.

Functionally, involved in the binding of tRNA to the ribosomes. This is Small ribosomal subunit protein uS10 from Campylobacter lari (strain RM2100 / D67 / ATCC BAA-1060).